Here is a 342-residue protein sequence, read N- to C-terminus: tRNA-specific 2-thiouridylase MnmA (342 aa).

ATP-binding positions include 6–13 (LLSGGVDS) and leucine 32. The active-site Nucleophile is the cysteine 92. A disulfide bond links cysteine 92 and cysteine 191. Glycine 116 provides a ligand contact to ATP. Residues 138–140 (KDQ) form an interaction with tRNA region. Cysteine 191 (cysteine persulfide intermediate) is an active-site residue. Residues 293-294 (RY) are interaction with tRNA.

The protein belongs to the MnmA/TRMU family.

The protein localises to the cytoplasm. It catalyses the reaction S-sulfanyl-L-cysteinyl-[protein] + uridine(34) in tRNA + AH2 + ATP = 2-thiouridine(34) in tRNA + L-cysteinyl-[protein] + A + AMP + diphosphate + H(+). Functionally, catalyzes the 2-thiolation of uridine at the wobble position (U34) of tRNA, leading to the formation of s(2)U34. In Helicobacter pylori (strain G27), this protein is tRNA-specific 2-thiouridylase MnmA.